The primary structure comprises 281 residues: 2,3,4,5-tetrahydropyridine-2,6-dicarboxylate N-succinyltransferase (281 aa).

Arginine 108 and aspartate 145 together coordinate substrate.

This sequence belongs to the transferase hexapeptide repeat family. As to quaternary structure, homotrimer.

Its subcellular location is the cytoplasm. The enzyme catalyses (S)-2,3,4,5-tetrahydrodipicolinate + succinyl-CoA + H2O = (S)-2-succinylamino-6-oxoheptanedioate + CoA. Its pathway is amino-acid biosynthesis; L-lysine biosynthesis via DAP pathway; LL-2,6-diaminopimelate from (S)-tetrahydrodipicolinate (succinylase route): step 1/3. The chain is 2,3,4,5-tetrahydropyridine-2,6-dicarboxylate N-succinyltransferase from Bradyrhizobium diazoefficiens (strain JCM 10833 / BCRC 13528 / IAM 13628 / NBRC 14792 / USDA 110).